Reading from the N-terminus, the 314-residue chain is Homoserine O-acetyltransferase (314 aa).

The active-site Acyl-thioester intermediate is the C142. The substrate site is built by K163 and S192. The active-site Proton acceptor is H235. E237 is an active-site residue. R249 provides a ligand contact to substrate.

Belongs to the MetA family.

Its subcellular location is the cytoplasm. It catalyses the reaction L-homoserine + acetyl-CoA = O-acetyl-L-homoserine + CoA. The protein operates within amino-acid biosynthesis; L-methionine biosynthesis via de novo pathway; O-acetyl-L-homoserine from L-homoserine: step 1/1. In terms of biological role, transfers an acetyl group from acetyl-CoA to L-homoserine, forming acetyl-L-homoserine. The protein is Homoserine O-acetyltransferase of Desulfovibrio desulfuricans (strain ATCC 27774 / DSM 6949 / MB).